The chain runs to 521 residues: Cytochrome P450 monooxygenase gloO (521 aa).

The N-terminal stretch at 1–26 is a signal peptide; the sequence is MIAALFTTNLQLGAVGVFIFALLAFA. Cysteine 464 lines the heme pocket.

The protein belongs to the cytochrome P450 family. The cofactor is heme.

It participates in mycotoxin biosynthesis. Functionally, cytochrome P450 monooxygenase; part of the gene cluster that mediates the biosynthesis of pneumocandins, lipohexapeptides of the echinocandin family that prevent fungal cell wall formation by non-competitive inhibition of beta-1,3-glucan synthase. The 10,12-dimethylmyristoyl side chain is synthesized by the reducing polyketide synthase gloL/GLPKS4. The thioesterase gloN/GLHYD exclusively interacts with gloL/GLPKS4 to maintain turnover of the polyketide side chain. The 10R,12S-dimethylmyristic acid is then transferred to the first thiolation domain of the nonribosomal peptide synthetase gloA/GLNRPS4 by the acyl-AMP ligase gloD/GLligase, followed by its acylation to L-ornithine to trigger elongation of the cyclic hexapeptide. L-ornithine, 4R-hydroxyl-L-proline (generated from L-proline by the dioxygenase gloF/GLOXY2), 3S-hydroxyl-L-homotyrosine (generated by gloG/GLHtyB, gloH/GLHtyA, gloI/GLHtyC, gloJ/GLHtyD and hydroxylated at C-3 by the dioxygenase gloM/GLOXY1), 3R-hydroxyl-L-glutamine (generated from L-glutamine probably by the dioxygenase gloE/GLOXY3) and 3S-hydroxyl-L-proline (generated from L-proline by the dioxygenase gloF/GLOXY2 to yield pneumocandin B0), or 3S-hydroxyl-4S-methyl-L-proline (generated from L-leucine by the dioxygenase gloC/GLOXY4 to yield pneumocandin A0) are sequentially added to the growing chain. The last C domain of gloA/GLNRPS4 is proposed to be responsible for cyclization by condensation to form the peptide bond between L-ornithine and 3S-hydroxyl-4S-methyl-L-proline (for pneumocandin A0) or 3S-hydroxyl-L-proline (for pneumocandin B0). Finally, the subsequent C-4 hydroxylation of 3S-hydroxyl-L-homotyrosine and L-ornithine dihydroxylation at C-4 and C-5 are performed by the cytochrome P450 monooxygenases gloP/GLP450-1 and gloO/GLP450-2, respectively. This Glarea lozoyensis (strain ATCC 20868 / MF5171) protein is Cytochrome P450 monooxygenase gloO.